The following is a 300-amino-acid chain: Porphobilinogen deaminase (300 aa).

At Cys243 the chain carries S-(dipyrrolylmethanemethyl)cysteine.

Belongs to the HMBS family. Monomer. It depends on dipyrromethane as a cofactor.

It carries out the reaction 4 porphobilinogen + H2O = hydroxymethylbilane + 4 NH4(+). Its pathway is porphyrin-containing compound metabolism; protoporphyrin-IX biosynthesis; coproporphyrinogen-III from 5-aminolevulinate: step 2/4. Its function is as follows. Tetrapolymerization of the monopyrrole PBG into the hydroxymethylbilane pre-uroporphyrinogen in several discrete steps. The polypeptide is Porphobilinogen deaminase (Clostridium novyi (strain NT)).